Here is a 208-residue protein sequence, read N- to C-terminus: MLSVILKESVRNLGKAGMVLKVKPGYARYLLTQKKAVRATKENLKSLEEQYLFIEKENLEKLEAAKVLKASLEDEFLIITRQAADDGKLFGSVTPKCISKLLSDKGYNIHYRNIFFYSVIKYIGEYVVNLELHPDLVLPITLYVVKNDLGAMQAQKLHAEKKRKIEEGKVEKGSCTEGESLELGSVDNDINSGNVDSNESEKQDSVSE.

The segment at 168–208 (GKVEKGSCTEGESLELGSVDNDINSGNVDSNESEKQDSVSE) is disordered. The segment covering 188-197 (NDINSGNVDS) has biased composition (polar residues). Residues 199 to 208 (ESEKQDSVSE) are compositionally biased toward basic and acidic residues.

It belongs to the bacterial ribosomal protein bL9 family.

Its function is as follows. Binds to the 23S rRNA. The polypeptide is Large ribosomal subunit protein bL9 (Ehrlichia chaffeensis (strain ATCC CRL-10679 / Arkansas)).